The primary structure comprises 142 residues: Inner membrane protein YqaA (142 aa).

Residues 1-2 (MS) lie on the Cytoplasmic side of the membrane. The chain crosses the membrane as a helical span at residues 3 to 23 (EALSLFSLFASSFLSATLLPG). At 24–26 (NSE) the chain is on the periplasmic side. A helical transmembrane segment spans residues 27–47 (VVLVAMLLSGISHPWVLVLTA). Over 48 to 86 (TMGNSLGGLTNVILGRFFPLRKTSRWQEKATGWLKRYGA) the chain is Cytoplasmic. The helical transmembrane segment at 87–107 (VTLLLSWMPVVGDLLCLLAGW) threads the bilayer. Topologically, residues 108–142 (MRISWGPVIFFLCLGKALRYVAVAAATVQGMMWWH) are periplasmic.

This sequence to H.influenzae HI_0489.

The protein resides in the cell inner membrane. The polypeptide is Inner membrane protein YqaA (yqaA) (Escherichia coli (strain K12)).